The chain runs to 497 residues: Nuclear pore complex protein npp-16 (497 aa).

Disordered stretches follow at residues 76 to 95, 210 to 308, and 359 to 379; these read VPRRTENSSESSGETVAPRK, TKKS…SAPK, and MENQNQAKPEGSGEDDEGEYV. Composition is skewed to basic and acidic residues over residues 231 to 240 and 250 to 260; these read KDGDKPKETP and KPAEPSEEPKA. A ranBD1 region spans residues 390 to 497; sequence EPDAVLSSKV…FTDKILEVAV (108 aa).

As to quaternary structure, interacts with importin beta imb-1. Interacts with DNA-directed RNA polymerase III subunit rpc-1. Interacts with TATA-box-binding protein tbp-1. Interacts with GTF3C5 homolog tftc-5. Interacts with GTF3C3 homolog tftc-3.

It localises to the nucleus. The protein localises to the nuclear pore complex. The protein resides in the nucleus membrane. Functionally, component of the nuclear pore complex. Plays a direct role in nuclear protein import. Required for anoxia-induced prophase arrest; may function in concert with cdk-1 to arrest prophase blastomeres in response to anoxia. This chain is Nuclear pore complex protein npp-16, found in Caenorhabditis elegans.